We begin with the raw amino-acid sequence, 524 residues long: MGGRSSCEDPGCPRGEGRVPRMGCVKSRFLREGSKASKIEPNANQKGPVYVPDPTSPKKLGPNSINSLPPGVVEGSEDTIVVALYDYEAIHREDLSFQKGDQMVVLEESGEWWKARSLATKKEGYIPSNYVARVNSLETEEWFFKGISRKDAERHLLAPGNMLGSFMIRDSETTKGSYSLSVRDFDPQHGDTVKHYKIRTLDSGGFYISPRSTFSSLQELVVHYKKGKDGLCQKLSVPCVSPKPQKPWEKDAWEIPRESLQMEKKLGAGQFGEVWMATYNKHTKVAVKTMKPGSMSVEAFLAEANLMKTLQHDKLVKLHAVVSQEPIFIVTEFMAKGSLLDFLKSEEGSKQPLPKLIDFSAQISEGMAFIEQRNYIHRDLRAANILVSASLVCKIADFGLARIIEDNEYTAREGAKFPIKWTAPEAINFGSFTIKSDVWSFGILLMEIVTYGRIPYPGMSNPEVIRALEHGYRMPRPDNCPEELYSIMIRCWKNRPEERPTFEYIQSVLDDFYTATESQYQQQP.

2 disordered regions span residues 1 to 20 (MGGR…GRVP) and 35 to 71 (KASK…LPPG). A lipid anchor (N-myristoyl glycine) is attached at Gly-2. Gly-3 is lipidated: S-palmitoyl cysteine. Position 50 is a phosphotyrosine; by autocatalysis (Tyr-50). An SH3 domain is found at 76–136 (SEDTIVVALY…PSNYVARVNS (61 aa)). The SH2 domain occupies 142 to 239 (WFFKGISRKD…GLCQKLSVPC (98 aa)). The residue at position 200 (Thr-200) is a Phosphothreonine. The residue at position 207 (Tyr-207) is a Phosphotyrosine. The Protein kinase domain occupies 260 to 513 (LQMEKKLGAG…YIQSVLDDFY (254 aa)). ATP-binding positions include 266 to 274 (LGAGQFGEV) and Lys-288. The Proton acceptor role is filled by Asp-379. Tyr-409 is modified (phosphotyrosine; by autocatalysis). Phosphoserine is present on Ser-460. Position 520 is a phosphotyrosine (Tyr-520).

The protein belongs to the protein kinase superfamily. Tyr protein kinase family. SRC subfamily. Interacts with ADAM15. Interacts with FASLG. Interacts with ARRB1 and ARRB2. Interacts with FCGR1A; the interaction may be indirect. Interacts with IL6ST. Interacts (via SH3 domain) with ELMO1. Interacts (via SH3 domain) with TP73. Interacts with YAP1. Interacts with ABL1 and ITGB1, and thereby recruits ABL1 to activated ITGB1. Interacts (via SH2 domain) with FLT3 (tyrosine phosphorylated). Interacts with CBL. Interacts with VAV1, WAS and RAPGEF1. Interacts (via SH3 domain) with WDCP. Phosphorylated on several tyrosine residues. Autophosphorylated. Becomes rapidly phosphorylated upon activation of the immunoglobulin receptors FCGR1A and FCGR2A. Phosphorylation at Tyr-409 increases kinase activity. Phosphorylation at Tyr-520 inhibits kinase activity. Kinase activity is not required for phosphorylation at Tyr-520, suggesting that this site may be a target of other kinases. Post-translationally, ubiquitinated by CBL, leading to its degradation via the proteasome. In terms of processing, isoform 2 palmitoylation at position 2 requires prior myristoylation. Palmitoylation at position 3 is required for caveolar localization of isoform 2. Expressed strongly in spleen and at very low levels in thymus.

The protein localises to the cytoplasmic vesicle. It localises to the secretory vesicle. The protein resides in the cytoplasm. It is found in the cytosol. Its subcellular location is the membrane. The protein localises to the caveola. It localises to the lysosome. The protein resides in the cell projection. It is found in the podosome membrane. Its subcellular location is the cell membrane. The protein localises to the cell junction. It localises to the focal adhesion. The protein resides in the cytoskeleton. It is found in the golgi apparatus. Its subcellular location is the nucleus. It carries out the reaction L-tyrosyl-[protein] + ATP = O-phospho-L-tyrosyl-[protein] + ADP + H(+). With respect to regulation, subject to autoinhibition, mediated by intramolecular interactions involving the SH2 and SH3 domains. Kinase activity is also regulated by phosphorylation at regulatory tyrosine residues. Phosphorylation at Tyr-409 is required for optimal activity. Phosphorylation at Tyr-520 inhibits kinase activity. Functionally, non-receptor tyrosine-protein kinase found in hematopoietic cells that transmits signals from cell surface receptors and plays an important role in the regulation of innate immune responses, including neutrophil, monocyte, macrophage and mast cell functions, phagocytosis, cell survival and proliferation, cell adhesion and migration. Acts downstream of receptors that bind the Fc region of immunoglobulins, such as FCGR1A and FCGR2A, but also CSF3R, PLAUR, the receptors for IFNG, IL2, IL6 and IL8, and integrins, such as ITGB1 and ITGB2. During the phagocytic process, mediates mobilization of secretory lysosomes, degranulation, and activation of NADPH oxidase to bring about the respiratory burst. Plays a role in the release of inflammatory molecules. Promotes reorganization of the actin cytoskeleton and actin polymerization, formation of podosomes and cell protrusions. Inhibits TP73-mediated transcription activation and TP73-mediated apoptosis. Phosphorylates CBL in response to activation of immunoglobulin gamma Fc region receptors. Phosphorylates ADAM15, BCR, ELMO1, FCGR2A, GAB1, GAB2, RAPGEF1, STAT5B, TP73, VAV1 and WAS. The polypeptide is Tyrosine-protein kinase HCK (Hck) (Rattus norvegicus (Rat)).